A 599-amino-acid polypeptide reads, in one-letter code: Zinc metalloproteinase dpy-31 (599 aa).

A signal peptide spans 1–22 (MALLKPFLSRTFSSFFATITGG). Residues 23–211 (RNLIDSIEEL…IQHGRRTKRK (189 aa)) constitute a propeptide that is removed on maturation. Residues 211 to 410 (KFIRSELRRW…IRLMNVIYCS (200 aa)) enclose the Peptidase M12A domain. N-linked (GlcNAc...) asparagine glycosylation occurs at N251. 5 cysteine pairs are disulfide-bonded: C254–C409, C277–C298, C413–C433, C435–C444, and C455–C483. H306 lines the Zn(2+) pocket. Residue E307 is part of the active site. Residues H310 and H316 each contribute to the Zn(2+) site. An EGF-like domain is found at 405–445 (NVIYCSDSCAQKLPCQRGGYTDPRRCGRCRCPDGFTGKLCE). Positions 455–571 (CGGRIELTSS…KGFQAQVRAL (117 aa)) constitute a CUB domain. N522 carries N-linked (GlcNAc...) asparagine glycosylation.

Requires Zn(2+) as cofactor.

Its subcellular location is the secreted. With respect to regulation, inhibited by marimastat and tripeptide hydroxamic acids. Metalloprotease which cleaves the carboxyl terminus of procollagens to mature collagens. Probably involved in cuticular collagen maturation. This Brugia malayi (Filarial nematode worm) protein is Zinc metalloproteinase dpy-31.